We begin with the raw amino-acid sequence, 200 residues long: Large ribosomal subunit protein uL4 (200 aa).

A disordered region spans residues 42 to 65; sequence TRAQKTRSDVSGGGAKPWRQKGTG.

It belongs to the universal ribosomal protein uL4 family. In terms of assembly, part of the 50S ribosomal subunit.

In terms of biological role, one of the primary rRNA binding proteins, this protein initially binds near the 5'-end of the 23S rRNA. It is important during the early stages of 50S assembly. It makes multiple contacts with different domains of the 23S rRNA in the assembled 50S subunit and ribosome. Its function is as follows. Forms part of the polypeptide exit tunnel. This chain is Large ribosomal subunit protein uL4, found in Photobacterium profundum (strain SS9).